Consider the following 159-residue polypeptide: uncharacterized protein (159 aa).

The segment at 9-36 is disordered; the sequence is VTSGNKEKKKKRSSAGLTGHAPPAADSS.

This is an uncharacterized protein from Caenorhabditis elegans.